A 250-amino-acid polypeptide reads, in one-letter code: PF03932 family protein CutC (250 aa).

Belongs to the CutC family.

The protein resides in the cytoplasm. The polypeptide is PF03932 family protein CutC (Proteus mirabilis (strain HI4320)).